An 84-amino-acid polypeptide reads, in one-letter code: Small ribosomal subunit protein uS17 (84 aa).

This sequence belongs to the universal ribosomal protein uS17 family. Part of the 30S ribosomal subunit.

Its function is as follows. One of the primary rRNA binding proteins, it binds specifically to the 5'-end of 16S ribosomal RNA. The polypeptide is Small ribosomal subunit protein uS17 (Clostridium perfringens (strain SM101 / Type A)).